The primary structure comprises 328 residues: Sterol-4-alpha-carboxylate 3-dehydrogenase, decarboxylating (328 aa).

The active-site Proton acceptor is the tyrosine 145. Residue lysine 149 participates in NAD(+) binding. Residues 259 to 279 (LHMVLPTPIALSLVWIMALIW) traverse the membrane as a helical segment.

Belongs to the 3-beta-HSD family. In terms of assembly, homodimer.

It localises to the endoplasmic reticulum membrane. The protein resides in the lipid droplet. The catalysed reaction is a 3beta-hydroxysteroid-4alpha-carboxylate + NADP(+) = a 3-oxosteroid + CO2 + NADPH. The enzyme catalyses a 3beta-hydroxysteroid-4alpha-carboxylate + NAD(+) = a 3-oxosteroid + CO2 + NADH. It participates in steroid biosynthesis; zymosterol biosynthesis; zymosterol from lanosterol: step 4/6. In terms of biological role, catalyzes the NAD(P)(+)-dependent oxidative decarboxylation of the C4 methyl groups of 4-alpha-carboxysterols in post-squalene cholesterol biosynthesis. This Dictyostelium discoideum (Social amoeba) protein is Sterol-4-alpha-carboxylate 3-dehydrogenase, decarboxylating (nsdhl).